The sequence spans 676 residues: MLPILLSVALLALSSARSPFFDLEDANSNSAEKFLRPPPGGGPPRPPPPEESQGEGHQKRPRPPGDGPEQGPAPPGARPPPGPPPPGPPPPGPAPPGARPPPGPPPPGPPPPGPAPPGARPPPGPPPPGPPPPGPAPPGARPPPGPPPPGPPPPGPAPPGARPPPGPPPPGPPPPGPAPPGARPPPGPPPPGPPPPGPAPPGARPPPGPPPPGPPPPGPAPPGARPPPGPPPPGPPPPGPAPPGARPPPGPPPLGPPPPGPAPPGARPPPGPPPPGPPPPGPAPPGARPPPGPPPPGPPPPGPAPPGARPPPGPPPPGPPPPGPAPPGARPPPGPPPPGPPPPGPAPPGARPPPGPPPPGPPPPGPAPPGARPPPGPPPPGPPPPGPAPPGARPPPGPPPPGPPPPGPAPPGARPPPPPPPPADEPQQGPAPSGDKPKKKPPPPAGPPPPGPPSPGPAPPGARPPPGPPPPGPPPPGPAPPGARPPPGPPPPGPPPPGPAPPGARPPPGPPPPGPPPPGPAPPGARPPPGPPPPGPPPPGPAPPGARPPPGPPPPGPPPPGPAPPGARPPPGPPPPGPPPPGPAPPGARPPPGPPPPGPPPPGPAPPGARPPPGPPPPGPPPPGPAPPGARPPPGPPPPGPPPPGPAPPGARPPPGPPPPPPGPSPPRPPPGPPPQ.

An N-terminal signal peptide occupies residues 1-16 (MLPILLSVALLALSSA). A phosphoserine mark is found at serine 28 and serine 30. The interval 29-676 (NSAEKFLRPP…PRPPPGPPPQ (648 aa)) is disordered. 3 stretches are compositionally biased toward pro residues: residues 36 to 50 (RPPPGGGPPRPPPPE), 71 to 424 (GPAP…PPAD), and 442 to 676 (PPPA…PPPQ). Positions 409–457 (APPGARPPPPPPPPADEPQQGPAPSGDKPKKKPPPPAGPPPPGPPSPGP) are excised as a propeptide.

In terms of tissue distribution, acinar cells and secretory granules of the parotid gland.

The protein resides in the secreted. The parotid hormone stimulates dentinal fluid transport in teeth. This is Basic proline-rich protein from Sus scrofa (Pig).